The following is a 94-amino-acid chain: Putative membrane protein insertion efficiency factor (94 aa).

It belongs to the UPF0161 family.

It is found in the cell inner membrane. Functionally, could be involved in insertion of integral membrane proteins into the membrane. This is Putative membrane protein insertion efficiency factor from Albidiferax ferrireducens (strain ATCC BAA-621 / DSM 15236 / T118) (Rhodoferax ferrireducens).